Reading from the N-terminus, the 185-residue chain is Peptidyl-tRNA hydrolase (185 aa).

Y14 is a binding site for tRNA. Residue H19 is the Proton acceptor of the active site. TRNA contacts are provided by F64, N66, and N112.

The protein belongs to the PTH family. In terms of assembly, monomer.

The protein localises to the cytoplasm. It catalyses the reaction an N-acyl-L-alpha-aminoacyl-tRNA + H2O = an N-acyl-L-amino acid + a tRNA + H(+). Its function is as follows. Hydrolyzes ribosome-free peptidyl-tRNAs (with 1 or more amino acids incorporated), which drop off the ribosome during protein synthesis, or as a result of ribosome stalling. Functionally, catalyzes the release of premature peptidyl moieties from peptidyl-tRNA molecules trapped in stalled 50S ribosomal subunits, and thus maintains levels of free tRNAs and 50S ribosomes. This Lacticaseibacillus paracasei (strain ATCC 334 / BCRC 17002 / CCUG 31169 / CIP 107868 / KCTC 3260 / NRRL B-441) (Lactobacillus paracasei) protein is Peptidyl-tRNA hydrolase.